Consider the following 157-residue polypeptide: UPF0225 protein Psyr_3863 (157 aa).

The protein belongs to the UPF0225 family.

In Pseudomonas syringae pv. syringae (strain B728a), this protein is UPF0225 protein Psyr_3863.